Consider the following 350-residue polypeptide: Ribosomal RNA large subunit methyltransferase M (350 aa).

Residues 217 to 220, D236, D256, and D272 each bind S-adenosyl-L-methionine; that span reads APGG. The Proton acceptor role is filled by K301.

The protein belongs to the class I-like SAM-binding methyltransferase superfamily. RNA methyltransferase RlmE family. RlmM subfamily. Monomer.

The protein localises to the cytoplasm. The enzyme catalyses cytidine(2498) in 23S rRNA + S-adenosyl-L-methionine = 2'-O-methylcytidine(2498) in 23S rRNA + S-adenosyl-L-homocysteine + H(+). Functionally, catalyzes the 2'-O-methylation at nucleotide C2498 in 23S rRNA. In Teredinibacter turnerae (strain ATCC 39867 / T7901), this protein is Ribosomal RNA large subunit methyltransferase M.